Reading from the N-terminus, the 1025-residue chain is MPQNADSLAVVLKCRDWENPGVTQLNRLEAHPPFCSWRNADDARVNRDSAQKRSLNGEWTFAWFSAPEAVPESWRTSDLQQADSVRVPSNWQMDGYDAPIYTNVTYPIPVNPPFVPADNPTGCYSLTFSIDADWLQAGQTRIIFDGVNSAFHLWCNSRWVGYGQDSRLPSEFDLTHFLLKGENRLAVMVLRWSDGSYLEDQDMWRMSGIFRDVSLLHKPATQIRDLRINTRFNDDFSRAVLEAEVRTTGERRDDLRVTVQLWDSETFVGEKTAPLGSEIIDERGAYPDRTTLRLNVEHPALWSAETPHLYRAVVQLHAADGTLIEAEACDVGFRQVSIENGLLLLNGKPLLIRGANRHEHHPENGQVMDKETMIKDILLMKQNNFNAVRCSHYPNHPLWYTLCDRYGLYVVDEANIETHGMVPMNRLSDDPVWLPAMSQRVTRMVQRDRNHPSIIIWSLGNESGHGANHDALYRWIKSEDPSRPVQYEGGGANTAATDIICPMYARVDQDQPFPAVPKWSIKKWLSMPGEQRPLILCEYAHAMGNSLGGYAKYWQAFRQYPRLQGGFVWDWVDQSLIKYDDDGRPWSAYGGDFGDAPNDRQFCMNGLVFADRTPHPSLYEAKHAQQFFQFALLPGAECQIEVTSEYLFRHSDNEVLHWSLALDGNPLTAGVVTLDIPPQGRQIIALPALPEAETAGQLWLTVRVEQPQATAWSQAGHISAWQQWKLGEKLATQWPQHAGNAPQLTSSGTAFRIVAGEKRWEFSRQQGVLTQFWIGEEAQLLTPLVDQFTRAPLDNDIGVSEATRIDPNAWVERWKAAGHYQAKAVLLQCDADTLASAVLITTAHAWQYQGETLFISRKTYRIDGNGEMQITVDVDVASGTPHPARIGLSCQLAQVAERVNWLGLGPHENYPDRLSAACFERWDLPLEEMYTPYVFPSENGLRCGTRELLYGAHQWRGDFQFNISRYGQKQLMETSHRHLLQPEAGTWLNIDGFHMGVGGDDSWSPSVSAEYQLSAGRYHYQISWR.

Residues Asn103 and Asp202 each contribute to the substrate site. Position 202 (Asp202) interacts with Na(+). Mg(2+) contacts are provided by Glu417, His419, and Glu462. Residues Glu462 and 538 to 541 (EYAH) each bind substrate. The active-site Proton donor is Glu462. Glu538 acts as the Nucleophile in catalysis. Asn598 is a binding site for Mg(2+). Phe602 and Asn605 together coordinate Na(+). Substrate-binding residues include Asn605 and Trp1003.

Belongs to the glycosyl hydrolase 2 family. As to quaternary structure, homotetramer. Mg(2+) serves as cofactor. The cofactor is Na(+).

It carries out the reaction Hydrolysis of terminal non-reducing beta-D-galactose residues in beta-D-galactosides.. The sequence is that of Beta-galactosidase from Citrobacter koseri (strain ATCC BAA-895 / CDC 4225-83 / SGSC4696).